Reading from the N-terminus, the 151-residue chain is 3-dehydroquinate dehydratase (151 aa).

Tyr26 (proton acceptor) is an active-site residue. Substrate-binding residues include Asn75, His81, and Asp88. The active-site Proton donor is the His101. Substrate-binding positions include 102 to 103 (LS) and Arg112.

The protein belongs to the type-II 3-dehydroquinase family. As to quaternary structure, homododecamer.

It catalyses the reaction 3-dehydroquinate = 3-dehydroshikimate + H2O. It participates in metabolic intermediate biosynthesis; chorismate biosynthesis; chorismate from D-erythrose 4-phosphate and phosphoenolpyruvate: step 3/7. Its function is as follows. Catalyzes a trans-dehydration via an enolate intermediate. The sequence is that of 3-dehydroquinate dehydratase from Shewanella halifaxensis (strain HAW-EB4).